The following is a 441-amino-acid chain: Double-stranded RNA-binding protein 1 (441 aa).

DRBM domains lie at Met-1 to Ser-71, Ser-86 to Gln-155, and Ser-169 to Asp-237. The segment at Leu-69–Lys-88 is disordered.

Binds double-stranded RNA. This Oryza sativa subsp. japonica (Rice) protein is Double-stranded RNA-binding protein 1 (DRB1).